The primary structure comprises 1691 residues: Protein TIC 214 (1691 aa).

The next 6 membrane-spanning stretches (helical) occupy residues 19–39, 60–80, 84–104, 123–143, 158–178, and 200–220; these read MLLG…SQIL, VLAQ…LLLL, LLTI…KDFP, LFLI…NSVL, TVFM…FNFF, and FIYA…LGRA. A disordered region spans residues 819–839; sequence EKQHTLQRKHKEIGSKSRELK.

The protein belongs to the TIC214 family. In terms of assembly, part of the Tic complex.

It localises to the plastid. The protein resides in the chloroplast inner membrane. In terms of biological role, involved in protein precursor import into chloroplasts. May be part of an intermediate translocation complex acting as a protein-conducting channel at the inner envelope. This Adiantum capillus-veneris (Maidenhair fern) protein is Protein TIC 214.